Reading from the N-terminus, the 320-residue chain is Phosphate acyltransferase (320 aa).

The protein belongs to the PlsX family. As to quaternary structure, homodimer. Probably interacts with PlsY.

Its subcellular location is the cytoplasm. It carries out the reaction a fatty acyl-[ACP] + phosphate = an acyl phosphate + holo-[ACP]. It functions in the pathway lipid metabolism; phospholipid metabolism. Catalyzes the reversible formation of acyl-phosphate (acyl-PO(4)) from acyl-[acyl-carrier-protein] (acyl-ACP). This enzyme utilizes acyl-ACP as fatty acyl donor, but not acyl-CoA. This chain is Phosphate acyltransferase, found in Syntrophomonas wolfei subsp. wolfei (strain DSM 2245B / Goettingen).